A 186-amino-acid polypeptide reads, in one-letter code: Potassium-transporting ATPase KdpC subunit (186 aa).

Residues 10–30 (LTIITMVLCGFLFPLAITLIG) traverse the membrane as a helical segment.

The protein belongs to the KdpC family. The system is composed of three essential subunits: KdpA, KdpB and KdpC.

The protein resides in the cell membrane. Functionally, part of the high-affinity ATP-driven potassium transport (or Kdp) system, which catalyzes the hydrolysis of ATP coupled with the electrogenic transport of potassium into the cytoplasm. This subunit acts as a catalytic chaperone that increases the ATP-binding affinity of the ATP-hydrolyzing subunit KdpB by the formation of a transient KdpB/KdpC/ATP ternary complex. This is Potassium-transporting ATPase KdpC subunit from Staphylococcus aureus (strain MRSA252).